We begin with the raw amino-acid sequence, 381 residues long: Cytochrome b (381 aa).

Helical transmembrane passes span 34 to 54, 78 to 99, 114 to 134, and 179 to 199; these read FGSL…FLAM, WLIR…YLHI, WNIG…GYVL, and FFAF…IHLL. Residues His-84 and His-98 each coordinate heme b. The heme b site is built by His-183 and His-197. A ubiquinone is bound at residue His-202. Helical transmembrane passes span 227 to 247, 289 to 309, 321 to 341, and 348 to 368; these read YKDL…ALFM, LGGV…PLLH, LTQI…WIGG, and FITV…IIMP.

Belongs to the cytochrome b family. In terms of assembly, the cytochrome bc1 complex contains 3 respiratory subunits (MT-CYB, CYC1 and UQCRFS1), 2 core proteins (UQCRC1 and UQCRC2) and probably 6 low-molecular weight proteins. Heme b serves as cofactor.

The protein resides in the mitochondrion inner membrane. Functionally, component of the ubiquinol-cytochrome c reductase complex (complex III or cytochrome b-c1 complex) that is part of the mitochondrial respiratory chain. The b-c1 complex mediates electron transfer from ubiquinol to cytochrome c. Contributes to the generation of a proton gradient across the mitochondrial membrane that is then used for ATP synthesis. This is Cytochrome b (mt-cyb) from Sphyrna tiburo tiburo (Hammerhead shark).